The primary structure comprises 98 residues: NADH-ubiquinone oxidoreductase chain 4L (98 aa).

The next 3 membrane-spanning stretches (helical) occupy residues 1–21 (MPII…GMLI), 29–49 (SLLC…LMAL), and 58–78 (IVPI…LALL).

This sequence belongs to the complex I subunit 4L family. Core subunit of respiratory chain NADH dehydrogenase (Complex I) which is composed of 45 different subunits.

It is found in the mitochondrion inner membrane. It carries out the reaction a ubiquinone + NADH + 5 H(+)(in) = a ubiquinol + NAD(+) + 4 H(+)(out). Functionally, core subunit of the mitochondrial membrane respiratory chain NADH dehydrogenase (Complex I) which catalyzes electron transfer from NADH through the respiratory chain, using ubiquinone as an electron acceptor. Part of the enzyme membrane arm which is embedded in the lipid bilayer and involved in proton translocation. The protein is NADH-ubiquinone oxidoreductase chain 4L (MT-ND4L) of Nasalis larvatus (Proboscis monkey).